The primary structure comprises 160 residues: CST complex subunit STN1 (160 aa).

The segment at residues 41 to 133 is a DNA-binding region (OB); the sequence is VEIVGTIVSR…QITANVAVAE (93 aa).

This sequence belongs to the STN1 family. In terms of assembly, component of the CST complex, composed of CTC1, TEN1 and STN1. Interacts with CTC1. Interacts with TEN1. Interacts with POT1A. In vitro interaction with TEN1 and POT1A is mutually exclusive, indicating that POT1A and TEN1 may compete for the same binding site. Widely expressed.

Its subcellular location is the nucleus. It localises to the chromosome. It is found in the telomere. Functionally, component of the CST complex, a complex that binds to single-stranded DNA and is required to protect telomeres from DNA degradation. The CST complex binds single-stranded DNA with high affinity in a sequence-independent manner, while isolated subunits bind DNA with low affinity by themselves. Associates with enzymatically active telomerase. Plays a genomewide role in DNA replication and facilitates re-replication at non-telomeric loci. This Arabidopsis thaliana (Mouse-ear cress) protein is CST complex subunit STN1.